A 120-amino-acid polypeptide reads, in one-letter code: Ribonuclease P protein component 2 (120 aa).

It belongs to the eukaryotic/archaeal RNase P protein component 2 family. In terms of assembly, consists of a catalytic RNA component and at least 4-5 protein subunits. Forms a subcomplex with Rnp3 which stimulates the catalytic RNA.

It is found in the cytoplasm. The catalysed reaction is Endonucleolytic cleavage of RNA, removing 5'-extranucleotides from tRNA precursor.. Functionally, part of ribonuclease P, a protein complex that generates mature tRNA molecules by cleaving their 5'-ends. The RNA is catalytic, but its KM for pre-tRNA is 170-fold decreased in the presence of the 4 known protein subunits (Rnp1-4). The protein subunits also decrease the amount of Mg(2+) needed for activity. This is Ribonuclease P protein component 2 from Pyrococcus furiosus (strain ATCC 43587 / DSM 3638 / JCM 8422 / Vc1).